Consider the following 906-residue polypeptide: Pre-mRNA-splicing factor prp1 (906 aa).

2 disordered regions span residues 50–129 and 142–164; these read IEQR…VSSQ and DEDWNNIPEPGDLTRKKRTKQPR. Positions 108–124 are enriched in basic and acidic residues; it reads REKQEQLQKEKYEKENP. Serine 235 is subject to Phosphoserine. 11 HAT repeats span residues 258–290, 322–353, 354–384, 385–416, 524–556, 558–590, 592–624, 693–725, 726–758, 760–792, and 824–856; these read GDIRKARKLLQSVIETNPKHASGWVAAARLEEV, HPAAEAKVIIANAVKKLPKSVTLWLEAEKLEN, QAQHKKRIIKKALEFNPTSVSLWKEAVNLEE, EVDNARILLARAVELIPMSIDLWLALARLETY, KCIDCARAVFAFSLRVYPKSEKLWLRAVELEKL, GTTESVCSILEKAVESCPKAEILWLLYAKERKN, NDIAGARNILGRAFEYNSNSEEIWLAAVRIEFV, EQIELARDAYLAGTKVCPYSIPLWLLLAKLEEK, QSVIRARVVFDRAKVKNPKNEFLWLELIKMELR, GNISQVRAALAKALQECPSSGLLWTEAIWLEPR, and KKADKARSWFLKAVKADQDNGDVWCWFYKYSLE.

As to quaternary structure, interacts with brr2 and spp42.

The protein localises to the nucleus. Involved in pre-mRNA splicing. Interacts with prp6 and prp13. May also be involved in the regulation of the G0-G1/G2 transition. Required for pre-spliceosome formation, which is the first step of pre-mRNA splicing. This protein is associated with snRNP U5. Has a role in branch site-3' splice site selection. Associates with the branch site-3' splice 3'-exon region. This Schizosaccharomyces pombe (strain 972 / ATCC 24843) (Fission yeast) protein is Pre-mRNA-splicing factor prp1 (prp1).